The following is a 107-amino-acid chain: uncharacterized protein (107 aa).

This is an uncharacterized protein from Schizosaccharomyces pombe (strain 972 / ATCC 24843) (Fission yeast).